The chain runs to 227 residues: Nitrobenzene nitroreductase (227 aa).

Residue 14 to 18 participates in FMN binding; the sequence is RRAKR. Residues serine 44 and isoleucine 109 each contribute to the NADP(+) site. Residues 172 to 173 and lysine 215 each bind FMN; that span reads VF.

This sequence belongs to the nitroreductase family. As to quaternary structure, monomer. It depends on FMN as a cofactor.

It carries out the reaction N-phenylhydroxylamine + 2 NADP(+) + H2O = nitrobenzene + 2 NADPH + 2 H(+). It functions in the pathway xenobiotic degradation; nitrobenzene degradation. Its activity is regulated as follows. Inhibited by dicumarol, p-hydroxymercuribenzoate and salicyl hydroxamate. Functionally, involved in the biodegradation of nitroaromatic compounds. Catalyzes the two-electron reduction of nitrobenzene (NB) to produce a nitrosobenzene (NOB) intermediate, which is immediately reduced to hydroxylaminobenzene (HAB) by a second two-electron transfer. Also active on menadione and nitrofurazone. Replacing NADPH with NADH results in a 4-fold decrease in the reaction rate. The protein is Nitrobenzene nitroreductase of Ectopseudomonas oleovorans (Pseudomonas oleovorans).